A 359-amino-acid polypeptide reads, in one-letter code: Non-functional pseudokinase ZRK2 (359 aa).

Residues 1-10 (MKSMVKKLKQ) are compositionally biased toward basic residues. Residues 1–20 (MKSMVKKLKQSLRSGSLEKR) are disordered. The region spanning 64 to 356 (LKATSNFGSS…KELKQIETLF (293 aa)) is the Protein kinase domain. Residues 70–78 (FGSSCFVTA) and lysine 97 contribute to the ATP site.

Belongs to the protein kinase superfamily. Ser/Thr protein kinase family. ZRK subfamily.

The chain is Non-functional pseudokinase ZRK2 from Arabidopsis thaliana (Mouse-ear cress).